The sequence spans 248 residues: 2,3-bisphosphoglycerate-dependent phosphoglycerate mutase (248 aa).

Residues 8 to 15, 21 to 22, arginine 60, 87 to 90, lysine 98, and 114 to 115 contribute to the substrate site; these read RHGESTWN, TG, ERHY, and RR. The active-site Tele-phosphohistidine intermediate is the histidine 9. Glutamate 87 acts as the Proton donor/acceptor in catalysis. Residues 117-137 form a disordered region; that stretch reads YDTPPPALEPTDPRASYDDPR. Over residues 127-137 the composition is skewed to basic and acidic residues; it reads TDPRASYDDPR. A substrate-binding site is contributed by 183–184; that stretch reads GN.

Belongs to the phosphoglycerate mutase family. BPG-dependent PGAM subfamily. In terms of assembly, homodimer.

The catalysed reaction is (2R)-2-phosphoglycerate = (2R)-3-phosphoglycerate. The protein operates within carbohydrate degradation; glycolysis; pyruvate from D-glyceraldehyde 3-phosphate: step 3/5. Functionally, catalyzes the interconversion of 2-phosphoglycerate and 3-phosphoglycerate. This chain is 2,3-bisphosphoglycerate-dependent phosphoglycerate mutase, found in Cupriavidus taiwanensis (strain DSM 17343 / BCRC 17206 / CCUG 44338 / CIP 107171 / LMG 19424 / R1) (Ralstonia taiwanensis (strain LMG 19424)).